We begin with the raw amino-acid sequence, 226 residues long: 2-C-methyl-D-erythritol 4-phosphate cytidylyltransferase (226 aa).

This sequence belongs to the IspD/TarI cytidylyltransferase family. IspD subfamily.

It carries out the reaction 2-C-methyl-D-erythritol 4-phosphate + CTP + H(+) = 4-CDP-2-C-methyl-D-erythritol + diphosphate. It participates in isoprenoid biosynthesis; isopentenyl diphosphate biosynthesis via DXP pathway; isopentenyl diphosphate from 1-deoxy-D-xylulose 5-phosphate: step 2/6. Catalyzes the formation of 4-diphosphocytidyl-2-C-methyl-D-erythritol from CTP and 2-C-methyl-D-erythritol 4-phosphate (MEP). The protein is 2-C-methyl-D-erythritol 4-phosphate cytidylyltransferase of Thermosipho africanus (strain TCF52B).